Reading from the N-terminus, the 83-residue chain is Evasin P1090 (83 aa).

A signal peptide spans 1–24 (MEVKIFAFLQIAVLIAFSLHLASA). 3 cysteine pairs are disulfide-bonded: Cys44/Cys63, Cys48/Cys65, and Cys59/Cys76. Asn47 carries an N-linked (GlcNAc...) asparagine glycan. Asn70 carries an N-linked (GlcNAc...) asparagine glycan.

The protein localises to the secreted. Its function is as follows. Salivary chemokine-binding protein which binds to host chemokines CXCL1, CXCL2, CXCL3, CXCL5, CXCL6, CXCL10, CXCL11 and CXCL13. This is Evasin P1090 from Ixodes ricinus (Common tick).